A 61-amino-acid polypeptide reads, in one-letter code: Large ribosomal subunit protein uL29 (61 aa).

It belongs to the universal ribosomal protein uL29 family.

This Xanthomonas euvesicatoria pv. vesicatoria (strain 85-10) (Xanthomonas campestris pv. vesicatoria) protein is Large ribosomal subunit protein uL29.